Consider the following 129-residue polypeptide: Small ribosomal subunit protein uS11 (129 aa).

Belongs to the universal ribosomal protein uS11 family. As to quaternary structure, part of the 30S ribosomal subunit. Interacts with proteins S7 and S18. Binds to IF-3.

Its function is as follows. Located on the platform of the 30S subunit, it bridges several disparate RNA helices of the 16S rRNA. Forms part of the Shine-Dalgarno cleft in the 70S ribosome. This is Small ribosomal subunit protein uS11 from Phenylobacterium zucineum (strain HLK1).